We begin with the raw amino-acid sequence, 161 residues long: Transcriptional repressor NrdR (161 aa).

Positions 1–11 (MRCPSCNSLDT) are enriched in polar residues. Positions 1–20 (MRCPSCNSLDTQVKDSRPTE) are disordered. The segment at 3–34 (CPSCNSLDTQVKDSRPTEDSSVIRRRRVCVTC) is a zinc-finger region. One can recognise an ATP-cone domain in the interval 49 to 139 (LTVIKRNGRR…VYRNFREAKD (91 aa)).

Belongs to the NrdR family. Zn(2+) serves as cofactor.

Functionally, negatively regulates transcription of bacterial ribonucleotide reductase nrd genes and operons by binding to NrdR-boxes. The protein is Transcriptional repressor NrdR of Bradyrhizobium sp. (strain BTAi1 / ATCC BAA-1182).